A 467-amino-acid chain; its full sequence is ATP-dependent protease ATPase subunit HslU (467 aa).

Residues Val22 and 64-69 contribute to the ATP site; that span reads GVGKTE. Residues 149–192 form a disordered region; sequence QTNNPLESLFGGAIPNFGQNNEDEEEPPTEEIKTKRSEIKRQLE. Basic and acidic residues predominate over residues 178-192; sequence EEIKTKRSEIKRQLE. ATP contacts are provided by Asp280, Glu345, and Arg417.

Belongs to the ClpX chaperone family. HslU subfamily. In terms of assembly, a double ring-shaped homohexamer of HslV is capped on each side by a ring-shaped HslU homohexamer. The assembly of the HslU/HslV complex is dependent on binding of ATP.

Its subcellular location is the cytoplasm. Functionally, ATPase subunit of a proteasome-like degradation complex; this subunit has chaperone activity. The binding of ATP and its subsequent hydrolysis by HslU are essential for unfolding of protein substrates subsequently hydrolyzed by HslV. HslU recognizes the N-terminal part of its protein substrates and unfolds these before they are guided to HslV for hydrolysis. The chain is ATP-dependent protease ATPase subunit HslU from Staphylococcus aureus (strain bovine RF122 / ET3-1).